The primary structure comprises 370 residues: Platelet-derived growth factor D (370 aa).

An N-terminal signal peptide occupies residues 1–18 (MHRLIFVYTLICANFCSC). A CUB domain is found at 52-170 (RDETIQVKGN…PGFKIYYSLL (119 aa)). The cysteines at positions 109 and 131 are disulfide-linked. Residue N276 is glycosylated (N-linked (GlcNAc...) asparagine). Intrachain disulfides connect C302–C360 and C306–C362.

This sequence belongs to the PDGF/VEGF growth factor family. As to quaternary structure, homodimer; disulfide-linked. Interacts with PDGFRB homodimers, and with heterodimers formed by PDGFRA and PDGFRB. Activated by proteolytic cleavage. Proteolytic removal of the N-terminal CUB domain releasing the core domain is necessary for unmasking the receptor-binding epitopes of the core domain. Cleavage after Arg-247 or Arg-249 by urokinase plasminogen activator gives rise to the active form. In terms of tissue distribution, expressed at high levels in the heart, pancreas, adrenal gland and ovary and at low levels in placenta, liver, kidney, prostate, testis, small intestine, spleen and colon. In the kidney, expressed by the visceral epithelial cells of the glomeruli. A widespread expression is also seen in the medial smooth muscle cells of arteries and arterioles, as well as in smooth muscle cells of vasa rectae in the medullary area. Expressed in the adventitial connective tissue surrounding the suprarenal artery. In chronic obstructive nephropathy, a persistent expression is seen in glomerular visceral epithelial cells and vascular smooth muscle cells, as well as de novo expression by periglomerular interstitial cells and by some neointimal cells of atherosclerotic vessels. Expression in normal prostate is seen preferentially in the mesenchyme of the gland while expression is increased and more profuse in prostate carcinoma. Expressed in many ovarian, lung, renal and brain cancer-derived cell lines.

Its subcellular location is the secreted. In terms of biological role, growth factor that plays an essential role in the regulation of embryonic development, cell proliferation, cell migration, survival and chemotaxis. Potent mitogen for cells of mesenchymal origin. Plays an important role in wound healing. Induces macrophage recruitment, increased interstitial pressure, and blood vessel maturation during angiogenesis. Can initiate events that lead to a mesangial proliferative glomerulonephritis, including influx of monocytes and macrophages and production of extracellular matrix. This Homo sapiens (Human) protein is Platelet-derived growth factor D (PDGFD).